We begin with the raw amino-acid sequence, 266 residues long: GTP cyclohydrolase FolE2 (266 aa).

Belongs to the GTP cyclohydrolase IV family.

It catalyses the reaction GTP + H2O = 7,8-dihydroneopterin 3'-triphosphate + formate + H(+). Its pathway is cofactor biosynthesis; 7,8-dihydroneopterin triphosphate biosynthesis; 7,8-dihydroneopterin triphosphate from GTP: step 1/1. Its function is as follows. Converts GTP to 7,8-dihydroneopterin triphosphate. The polypeptide is GTP cyclohydrolase FolE2 (Burkholderia mallei (strain ATCC 23344)).